Here is a 374-residue protein sequence, read N- to C-terminus: Putative phosphoserine aminotransferase (374 aa).

An L-glutamate-binding site is contributed by arginine 48. Pyridoxal 5'-phosphate-binding positions include 82-83, phenylalanine 106, threonine 152, aspartate 174, and glutamine 197; that span reads AT. At lysine 198 the chain carries N6-(pyridoxal phosphate)lysine. A pyridoxal 5'-phosphate-binding site is contributed by 249–250; it reads NT.

Belongs to the class-V pyridoxal-phosphate-dependent aminotransferase family. SerC subfamily. In terms of assembly, homodimer. Pyridoxal 5'-phosphate is required as a cofactor.

The protein localises to the cytoplasm. It carries out the reaction O-phospho-L-serine + 2-oxoglutarate = 3-phosphooxypyruvate + L-glutamate. It catalyses the reaction 4-(phosphooxy)-L-threonine + 2-oxoglutarate = (R)-3-hydroxy-2-oxo-4-phosphooxybutanoate + L-glutamate. Its pathway is amino-acid biosynthesis; L-serine biosynthesis; L-serine from 3-phospho-D-glycerate: step 2/3. It functions in the pathway cofactor biosynthesis; pyridoxine 5'-phosphate biosynthesis; pyridoxine 5'-phosphate from D-erythrose 4-phosphate: step 3/5. Functionally, catalyzes the reversible conversion of 3-phosphohydroxypyruvate to phosphoserine and of 3-hydroxy-2-oxo-4-phosphonooxybutanoate to phosphohydroxythreonine. The protein is Putative phosphoserine aminotransferase of Mycolicibacterium paratuberculosis (strain ATCC BAA-968 / K-10) (Mycobacterium paratuberculosis).